The sequence spans 1285 residues: Dermonecrotic toxin (1285 aa).

A helical transmembrane segment spans residues 402-422 (MLVPAVGIPINFALSATALGL).

Its subcellular location is the cytoplasm. The protein localises to the secreted. It localises to the host membrane. In terms of biological role, this is a dermonecrotic toxin. This osteolytic toxin, induces bone resorption. Potent mitogen. This toxin is associated with the severe progressive form of the atrophic rhinitis, a major respiratory disease in pigs. The sequence is that of Dermonecrotic toxin (toxA) from Pasteurella multocida.